The chain runs to 320 residues: ATP-dependent 6-phosphofructokinase (320 aa).

Glycine 12 serves as a coordination point for ATP. ADP-binding positions include 22–26 and 55–60; these read RGVVR and RYSVSD. ATP is bound by residues 73-74 and 103-106; these read RF and GDGS. Aspartate 104 is a Mg(2+) binding site. Position 126–128 (126–128) interacts with substrate; that stretch reads TID. Residue aspartate 128 is the Proton acceptor of the active site. Arginine 155 lines the ADP pocket. Substrate contacts are provided by residues arginine 163 and 170 to 172; that span reads MGR. ADP is bound by residues 186-188, lysine 212, and 214-216; these read GCE and KKH. Substrate-binding positions include glutamate 223, arginine 244, and 250 to 253; that span reads HIQR.

The protein belongs to the phosphofructokinase type A (PFKA) family. ATP-dependent PFK group I subfamily. Prokaryotic clade 'B1' sub-subfamily. In terms of assembly, homotetramer. Requires Mg(2+) as cofactor.

The protein localises to the cytoplasm. The enzyme catalyses beta-D-fructose 6-phosphate + ATP = beta-D-fructose 1,6-bisphosphate + ADP + H(+). The protein operates within carbohydrate degradation; glycolysis; D-glyceraldehyde 3-phosphate and glycerone phosphate from D-glucose: step 3/4. Allosterically activated by ADP and other diphosphonucleosides, and allosterically inhibited by phosphoenolpyruvate. Catalyzes the phosphorylation of D-fructose 6-phosphate to fructose 1,6-bisphosphate by ATP, the first committing step of glycolysis. The polypeptide is ATP-dependent 6-phosphofructokinase (Cronobacter sakazakii (strain ATCC BAA-894) (Enterobacter sakazakii)).